Consider the following 304-residue polypeptide: E3 ubiquitin-protein ligase BOI (304 aa).

The tract at residues 178–214 (LQERVKSLYVENQIWRDIAQTNEANANTLRTNLDQVL) is WRD domain. The stretch at 197–220 (QTNEANANTLRTNLDQVLAQLETF) forms a coiled coil. The segment at 254 to 291 (CKRCGEREASVLVLPCRHLCLCTVCGGSALLRTCPVCD) adopts an RING-type zinc-finger fold.

In terms of assembly, interacts with MYB108/BOS1 and the DELLA proteins GAI, RGA, RGL1, RGL2 and RGL3. As to expression, expressed in leaves, siliques, roots, flowering tissues and stigma tips.

It localises to the nucleus. The enzyme catalyses S-ubiquitinyl-[E2 ubiquitin-conjugating enzyme]-L-cysteine + [acceptor protein]-L-lysine = [E2 ubiquitin-conjugating enzyme]-L-cysteine + N(6)-ubiquitinyl-[acceptor protein]-L-lysine.. Its pathway is protein degradation; proteasomal ubiquitin-dependent pathway. E3 ubiquitin-protein ligase involved in the regulation of pathogen and abiotic stress responses by facilitating degradation of MYB108/BOI. Attenuates cell death by preventing caspase activation. Has no effect on the stability of the DELLA proteins. Not regulated by MYB108/BOI. This is E3 ubiquitin-protein ligase BOI (BOI) from Arabidopsis thaliana (Mouse-ear cress).